The chain runs to 408 residues: Argininosuccinate synthase (408 aa).

ATP is bound by residues A10 to S18 and A37. Residues Y90 and S95 each contribute to the L-citrulline site. G120 provides a ligand contact to ATP. Residues T122, N126, and D127 each contribute to the L-aspartate site. N126 contacts L-citrulline. L-citrulline-binding residues include R130, S181, S190, E266, and Y278.

This sequence belongs to the argininosuccinate synthase family. Type 1 subfamily. Homotetramer.

The protein resides in the cytoplasm. It catalyses the reaction L-citrulline + L-aspartate + ATP = 2-(N(omega)-L-arginino)succinate + AMP + diphosphate + H(+). It functions in the pathway amino-acid biosynthesis; L-arginine biosynthesis; L-arginine from L-ornithine and carbamoyl phosphate: step 2/3. This chain is Argininosuccinate synthase, found in Cereibacter sphaeroides (strain ATCC 17029 / ATH 2.4.9) (Rhodobacter sphaeroides).